A 257-amino-acid chain; its full sequence is Transcription factor LBX2 (257 aa).

Residues 1-43 (MTSSSKDMKAGSVLQSSGEERRRGPLDQLPPPANSNKPLTPFS) are disordered. The tract at residues 1–46 (MTSSSKDMKAGSVLQSSGEERRRGPLDQLPPPANSNKPLTPFSIED) is required for convergent extension movement and hypaxial myogenesis during gastrulation. Required for the formation of thick and thin myofilaments. Required for myod1 expression in the pectoral fin bud. Required for continuous expression of cxcl12a in the posterior lateral mesoderm at the tail bud stage and in adaxial cells at the 10-somite stage. A DNA-binding region (homeobox) is located at residues 126-185 (RRKSRTAFTNHQIYELEKRFLYQKYLSPADRDQIAQQLGLTNAQVITWFQNRRAKLKRDL). The disordered stretch occupies residues 206–257 (LVSMEDMEDAHGGSGPISPSLSPRAFPQSPSSSRGQTTDEFSEEDEEIEVDD). A compositionally biased stretch (polar residues) spans 233–243 (QSPSSSRGQTT). Acidic residues predominate over residues 245–257 (EFSEEDEEIEVDD).

In terms of assembly, interacts (via N-terminus) with tle3a/gro2 (via C-terminus).

It is found in the nucleus. Transcription factor required in several developmental processes. Involved in axis formation during embryonic development by inhibiting tle3a/gro2 from binding to tcf7l1a, thereby facilitating ctnnb1-mediated transcription of canonical Wnt/CTNNB1 signaling target genes. Regulates convergent extension movements and hypaxial myogenesis during gastrulation by activating non-canonical Wnt signaling via wnt5b. Required for the formation of myofibrils and fusion of fast muscle precursor cells, potentially via transcriptional regulation of genes specific to thick and thin myofilaments. Regulates the migration of the posterior lateral line primordium during embryonic development, possibly via regulation of cxcl12a/sdf1a expression in the posterior lateral mesoderm, thereby modulating the deposition of neuromasts at correct intervals. The protein is Transcription factor LBX2 of Danio rerio (Zebrafish).